A 352-amino-acid polypeptide reads, in one-letter code: Protein MGF 360-9L (352 aa).

It belongs to the asfivirus MGF 360 family. Interacts with host STAT1; this interaction mediates STAT1 degradation through apoptosis. Interacts with host STAT2; this interaction mediates STAT2 degradation through the proteasome.

The protein localises to the host cytoplasm. Plays a role in virus cell tropism, and may be required for efficient virus replication in macrophages. This is Protein MGF 360-9L from Ornithodoros (relapsing fever ticks).